We begin with the raw amino-acid sequence, 289 residues long: Serine/threonine-protein phosphatase Pgam5, mitochondrial (289 aa).

The chain crosses the membrane as a helical span at residues L7–L23.

It belongs to the phosphoglycerate mutase family. BPG-dependent PGAM subfamily. In terms of assembly, interacts with Pk92B/ASK1.

Its subcellular location is the mitochondrion outer membrane. The catalysed reaction is O-phospho-L-seryl-[protein] + H2O = L-seryl-[protein] + phosphate. It catalyses the reaction O-phospho-L-threonyl-[protein] + H2O = L-threonyl-[protein] + phosphate. Functionally, displays phosphatase activity for serine/threonine residues, and dephosphorylates and activates Pk92B kinase. Has apparently no phosphoglycerate mutase activity. The protein is Serine/threonine-protein phosphatase Pgam5, mitochondrial of Drosophila ananassae (Fruit fly).